The primary structure comprises 214 residues: Potassium/proton antiporter CemA (214 aa).

Helical transmembrane passes span 92–112 and 174–194; these read ILHLSTNIICFIIFRGYSILG and IISGLVSTFPVILDTIFKYWI.

It belongs to the CemA family.

It is found in the plastid. The protein localises to the chloroplast inner membrane. The enzyme catalyses K(+)(in) + H(+)(out) = K(+)(out) + H(+)(in). Its function is as follows. Contributes to K(+)/H(+) antiport activity by supporting proton efflux to control proton extrusion and homeostasis in chloroplasts in a light-dependent manner to modulate photosynthesis. Prevents excessive induction of non-photochemical quenching (NPQ) under continuous-light conditions. Indirectly promotes efficient inorganic carbon uptake into chloroplasts. The chain is Potassium/proton antiporter CemA from Oenothera argillicola (Appalachian evening primrose).